The sequence spans 244 residues: Adenosylcobinamide-GDP ribazoletransferase (244 aa).

5 helical membrane-spanning segments follow: residues 31–51 (LLCY…ASHL), 55–75 (APAP…SGAL), 109–129 (IAVV…WVLV), 133–153 (AGAL…GLFL), and 188–208 (LLLG…VFLW).

It belongs to the CobS family. The cofactor is Mg(2+).

The protein localises to the cell inner membrane. The enzyme catalyses alpha-ribazole + adenosylcob(III)inamide-GDP = adenosylcob(III)alamin + GMP + H(+). It carries out the reaction alpha-ribazole 5'-phosphate + adenosylcob(III)inamide-GDP = adenosylcob(III)alamin 5'-phosphate + GMP + H(+). The protein operates within cofactor biosynthesis; adenosylcobalamin biosynthesis; adenosylcobalamin from cob(II)yrinate a,c-diamide: step 7/7. Its function is as follows. Joins adenosylcobinamide-GDP and alpha-ribazole to generate adenosylcobalamin (Ado-cobalamin). Also synthesizes adenosylcobalamin 5'-phosphate from adenosylcobinamide-GDP and alpha-ribazole 5'-phosphate. In Pseudomonas putida (strain W619), this protein is Adenosylcobinamide-GDP ribazoletransferase.